We begin with the raw amino-acid sequence, 134 residues long: MNSQLIGILFSALLGAALGQRMRCYDCGGGPSNSCKQTVITCGEGERCGFLDRKPQPSSEQAKQPSATLSHHYPACVATHHCNQVAIESVGDVTFTTQKNCCFGDLCNGAVASSSTPLCILAAVTTLAWLLSGQ.

The first 19 residues, M1 to G19, serve as a signal peptide directing secretion. The UPAR/Ly6 domain maps to M22–L121. Cystine bridges form between C24–C48, C27–C35, C42–C76, C82–C101, and C102–C107. O-linked (GalNAc...) threonine glycosylation is present at T68. Residue N108 is the site of GPI-anchor amidated asparagine attachment. Residues G109 to Q134 constitute a propeptide, removed in mature form.

As to quaternary structure, homodimer. Post-translationally, O-glycosylated.

It localises to the cell membrane. The polypeptide is Lymphocyte antigen 6 complex locus protein G6d (Ly6g6d) (Rattus norvegicus (Rat)).